Reading from the N-terminus, the 152-residue chain is Acidic phospholipase A2 (152 aa).

A signal peptide spans 1-21 (MNPAHLLVLSAVCVSLLGASS). Positions 22–27 (IPPQPL) are excised as a propeptide. 7 disulfides stabilise this stretch: Cys-38/Cys-104, Cys-54/Cys-151, Cys-56/Cys-72, Cys-71/Cys-132, Cys-78/Cys-125, Cys-88/Cys-118, and Cys-111/Cys-123. Positions 55, 57, and 59 each coordinate Ca(2+). Residue His-75 is part of the active site. Asp-76 lines the Ca(2+) pocket. Asp-126 is a catalytic residue.

The protein belongs to the phospholipase A2 family. Group I subfamily. D49 sub-subfamily. The cofactor is Ca(2+). In terms of tissue distribution, expressed by the venom gland.

It is found in the secreted. It catalyses the reaction a 1,2-diacyl-sn-glycero-3-phosphocholine + H2O = a 1-acyl-sn-glycero-3-phosphocholine + a fatty acid + H(+). PLA2 catalyzes the calcium-dependent hydrolysis of the 2-acyl groups in 3-sn-phosphoglycerides. This chain is Acidic phospholipase A2, found in Ophiophagus hannah (King cobra).